Consider the following 245-residue polypeptide: Lactate utilization protein A (245 aa).

The protein belongs to the LutA/YkgE family.

Its function is as follows. Is involved in L-lactate degradation and allows cells to grow with lactate as the sole carbon source. This Exiguobacterium sp. (strain ATCC BAA-1283 / AT1b) protein is Lactate utilization protein A.